The primary structure comprises 712 residues: Polyribonucleotide nucleotidyltransferase (712 aa).

D487 and D493 together coordinate Mg(2+). A KH domain is found at 554-613 (PKIITMTINPDKIRDVIGPSGKQINKIIEETGVKIDIEQDGTVFISSINQEMNDKAKKII). The S1 motif domain maps to 623-691 (GEIYEAKVKR…KQGRVNLSRK (69 aa)).

This sequence belongs to the polyribonucleotide nucleotidyltransferase family. The cofactor is Mg(2+).

The protein localises to the cytoplasm. The catalysed reaction is RNA(n+1) + phosphate = RNA(n) + a ribonucleoside 5'-diphosphate. Involved in mRNA degradation. Catalyzes the phosphorolysis of single-stranded polyribonucleotides processively in the 3'- to 5'-direction. The sequence is that of Polyribonucleotide nucleotidyltransferase from Bacillus cereus (strain ATCC 14579 / DSM 31 / CCUG 7414 / JCM 2152 / NBRC 15305 / NCIMB 9373 / NCTC 2599 / NRRL B-3711).